Here is a 291-residue protein sequence, read N- to C-terminus: Pantothenate synthetase (291 aa).

30 to 37 (MGYLHVGH) contacts ATP. The active-site Proton donor is the H37. Residue Q61 participates in (R)-pantoate binding. Residue Q61 coordinates beta-alanine. Residue 147–150 (GEKD) participates in ATP binding. Q153 contacts (R)-pantoate. Residues V176 and 184–187 (CSSR) contribute to the ATP site.

This sequence belongs to the pantothenate synthetase family. In terms of assembly, homodimer.

The protein localises to the cytoplasm. The enzyme catalyses (R)-pantoate + beta-alanine + ATP = (R)-pantothenate + AMP + diphosphate + H(+). Its pathway is cofactor biosynthesis; (R)-pantothenate biosynthesis; (R)-pantothenate from (R)-pantoate and beta-alanine: step 1/1. In terms of biological role, catalyzes the condensation of pantoate with beta-alanine in an ATP-dependent reaction via a pantoyl-adenylate intermediate. This is Pantothenate synthetase from Sinorhizobium medicae (strain WSM419) (Ensifer medicae).